The chain runs to 228 residues: Ankyrin repeat domain-containing protein 46 (228 aa).

4 ANK repeats span residues 11-40 (QTNV…DPNI), 44-74 (RGRT…PLAT), 77-103 (QGNT…KIDI), and 107-138 (QGAT…EVKG). Residues 195–215 (VLLLILVIALLSLGIAYYVSG) form a helical membrane-spanning segment.

It is found in the membrane. This chain is Ankyrin repeat domain-containing protein 46 (Ankrd46), found in Rattus norvegicus (Rat).